A 327-amino-acid polypeptide reads, in one-letter code: Inactive peptidyl-prolyl cis-trans isomerase FKBP6 (327 aa).

The PPIase FKBP-type domain maps to 54 to 143; it reads DASVLVKYSG…LFEIELLDFL (90 aa). TPR repeat units follow at residues 171 to 204, 219 to 252, and 253 to 286; these read AATE…LRRR, LPVL…DQKN, and AKAL…QPFN.

Belongs to the FKBP6 family. In terms of assembly, interacts (via TPR repeats) with HSP90. Interacts with HSP72/HSPA2 and CLTC. Interacts with GAPDH; leading to inhibit GAPDH catalytic activity. Detected in all tissues examined, with higher expression in testis, heart, skeletal muscle, liver, and kidney.

It localises to the cytoplasm. It is found in the nucleus. Its function is as follows. Has an essential role in spermatogenesis. It is required to repress transposable elements and prevent their mobilization, which is essential for the germline integrity. Acts via the piRNA metabolic process, which mediates the repression of transposable elements during meiosis by forming complexes composed of piRNAs and Piwi proteins and govern the methylation and subsequent repression of transposons. Acts as a co-chaperone via its interaction with HSP90 and is required for the piRNA amplification process, the secondary piRNA biogenesis. May be required together with HSP90 in removal of 16 nucleotide ping-pong by-products from Piwi complexes, possibly facilitating turnover of Piwi complexes. In Homo sapiens (Human), this protein is Inactive peptidyl-prolyl cis-trans isomerase FKBP6 (FKBP6).